The following is a 585-amino-acid chain: Arginine--tRNA ligase (585 aa).

The short motif at 131 to 141 is the 'HIGH' region element; it reads ANPTGPMHVGH.

Belongs to the class-I aminoacyl-tRNA synthetase family. In terms of assembly, monomer.

The protein resides in the cytoplasm. It carries out the reaction tRNA(Arg) + L-arginine + ATP = L-arginyl-tRNA(Arg) + AMP + diphosphate. This Bartonella henselae (strain ATCC 49882 / DSM 28221 / CCUG 30454 / Houston 1) (Rochalimaea henselae) protein is Arginine--tRNA ligase.